Here is a 1419-residue protein sequence, read N- to C-terminus: Myosin-2B (1419 aa).

One can recognise a Myosin N-terminal SH3-like domain in the interval 4-57 (EVGTRCWYPNSEAGWIGCEVTKNDFQDGTYHIELTSETGLVIPIETKHLESNNA). A Myosin motor domain is found at 75 to 780 (EATHDLTTLS…VLAYLEKIRS (706 aa)). Residue 169-176 (GESGAGKT) coordinates ATP. The tract at residues 451 to 531 (FIGVLDIYGF…LGILSLLDEE (81 aa)) is actin-binding. IQ domains are found at residues 783–805 (VTEL…LYLQ), 806–830 (AMLS…DFEM), 831–854 (KTDA…VFET), 855–878 (LKNI…QREF), 879–901 (ESRS…RYQT), and 902–931 (LKTG…QAES). Positions 909–940 (IQALVRRKQSQEKLKQLKIQAESAASLKNSAA) form a coiled coil. The tract at residues 1061-1419 (KDNERTSTSS…VIKELGSLLA (359 aa)) is non alpha-helical, tail domain. A Dilute domain is found at 1143–1357 (HSILKQTVQD…LNHLSNTARR (215 aa)).

Belongs to the TRAFAC class myosin-kinesin ATPase superfamily. Myosin family. Homodimer. Interacts with calmodulin (CMD1) and the myosin light chain MLC1 through its IQ repeats.

In terms of biological role, myosin heavy chain that is required for the cell cycle-regulated transport of various organelles and proteins for their segregation. Functions by binding with its tail domain to receptor proteins on organelles and exerting force with its N-terminal motor domain against actin filaments, thereby transporting its cargo along polarized actin cables. The polypeptide is Myosin-2B (MYO2B) (Naumovozyma castellii (Yeast)).